A 253-amino-acid chain; its full sequence is Blue-light photoreceptor (253 aa).

The PAS domain occupies 6-79; sequence KFDVILKALN…AKIRHAINEK (74 aa). Cys56 carries the post-translational modification S-4a-FMN cysteine. The region spanning 80–133 is the PAC domain; sequence STANVLLKNYRKNGTSFMNELTIEPIYDDNDHLYFVGIQKDVTTEHNYQLELEK. In terms of domain architecture, STAS spans 142 to 253; that stretch reads STPIVPIKEN…STIKEALQFY (112 aa).

FMN binds covalently to cysteine after exposure to blue light and this bond is spontaneously broken in the dark.

Exhibits the same spectroscopical features and blue-light induced photochemistry as plants phototropins, with the reversible formation of a blue-shifted photoproduct, assigned to an FMN-cysteine thiol adduct. Positive regulator in the activation of the general stress transcription factor sigma-B. This is Blue-light photoreceptor from Listeria innocua serovar 6a (strain ATCC BAA-680 / CLIP 11262).